Reading from the N-terminus, the 81-residue chain is Dermaseptin-B2 (81 aa).

The signal sequence occupies residues 1-22 (MAFLKKSLFLVLFLGLVSLSIC). Positions 23–43 (EEEKRENEDEEEQEDDEQSEM) are excised as a propeptide. Positions 24–46 (EEKRENEDEEEQEDDEQSEMKRG) are disordered. A compositionally biased stretch (acidic residues) spans 30–40 (EDEEEQEDDEQ). A hinge region that separates the two alpha-helices that constitute the peptide region spans residues 54–55 (VG). At V78 the chain carries Valine amide. Residues 80 to 81 (EQ) constitute a propeptide that is removed on maturation.

In terms of processing, amidation permits an increased antimicrobial activity against some microorganisms such as T.album and S.cerevisiae. Post-translationally, may contain a D-amino acid residue, since the natural peptide is not identical in chromatographic properties to the synthetic peptide. Expressed by the skin glands.

It is found in the secreted. The protein resides in the target cell membrane. Cationic amphipathic alpha-helical antimicrobial peptide with potent activity against Gram-negative and Gram-positive bacteria, fungi and protozoa. Acts in a synergistic effect in combination with Plasticin-B1 at doses that are not active alone. Acts by disturbing membrane functions. On model membranes, induces a strong perturbation of anionic lipid bilayers, resides at the hydrocarbon core-water interface, parallel to the plane of the membrane, and interacts preferentially with the polar head groups and glycerol backbone region of the anionic phospholipids, as well as the region of the lipid acyl chain near the bilayer surface. Induces a positive curvature of the bilayer and clustering of anionic lipids, consistent with a carpet mechanism, that may lead to the formation of mixed peptide-phospholipid toroidal, transient pores and membrane permeation/disruption once a threshold peptide accumulation is reached. Also enhances binding of agonists to adenosine A1 receptors (ADORA1), adenosine A2a receptors (ADORA2A), alpha-2 adrenergic receptors (ADRA2A) and 5-hydroxytryptamine 1A receptors (HTR1A). In addition, it enhances guanyl nucleotide exchange which may result in the conversion of receptors to a high affinity state complexed with guanyl nucleotide free G-protein. Affects human behavior eliciting profound malaise, followed by listlessness and then euphoria. Does not show cytotoxic activity on CHO cells. Does not act as a chemoattractant. Does not show hemolytic activity. The protein is Dermaseptin-B2 (ADR) of Phyllomedusa bicolor (Two-colored leaf frog).